Reading from the N-terminus, the 141-residue chain is D-aminoacyl-tRNA deacylase (141 aa).

The Gly-cisPro motif, important for rejection of L-amino acids motif lies at 133 to 134; that stretch reads GP.

This sequence belongs to the DTD family. Homodimer.

The protein localises to the cytoplasm. The catalysed reaction is glycyl-tRNA(Ala) + H2O = tRNA(Ala) + glycine + H(+). It carries out the reaction a D-aminoacyl-tRNA + H2O = a tRNA + a D-alpha-amino acid + H(+). In terms of biological role, an aminoacyl-tRNA editing enzyme that deacylates mischarged D-aminoacyl-tRNAs. Also deacylates mischarged glycyl-tRNA(Ala), protecting cells against glycine mischarging by AlaRS. Acts via tRNA-based rather than protein-based catalysis; rejects L-amino acids rather than detecting D-amino acids in the active site. By recycling D-aminoacyl-tRNA to D-amino acids and free tRNA molecules, this enzyme counteracts the toxicity associated with the formation of D-aminoacyl-tRNA entities in vivo and helps enforce protein L-homochirality. This chain is D-aminoacyl-tRNA deacylase, found in Beutenbergia cavernae (strain ATCC BAA-8 / DSM 12333 / CCUG 43141 / JCM 11478 / NBRC 16432 / NCIMB 13614 / HKI 0122).